The sequence spans 141 residues: Large ribosomal subunit protein uL11 (141 aa).

The protein belongs to the universal ribosomal protein uL11 family. In terms of assembly, part of the ribosomal stalk of the 50S ribosomal subunit. Interacts with L10 and the large rRNA to form the base of the stalk. L10 forms an elongated spine to which L12 dimers bind in a sequential fashion forming a multimeric L10(L12)X complex. Post-translationally, one or more lysine residues are methylated.

In terms of biological role, forms part of the ribosomal stalk which helps the ribosome interact with GTP-bound translation factors. This chain is Large ribosomal subunit protein uL11, found in Natranaerobius thermophilus (strain ATCC BAA-1301 / DSM 18059 / JW/NM-WN-LF).